A 295-amino-acid polypeptide reads, in one-letter code: Movement protein BC1 (295 aa).

This sequence belongs to the begomovirus movement protein BC1 family. Binds to dimeric supercoiled plasmid DNA. In terms of processing, phosphorylated.

It is found in the host cell membrane. Its subcellular location is the host microsome membrane. It localises to the host endoplasmic reticulum membrane. In terms of biological role, transports viral genome to neighboring plant cells directly through plasmosdesmata, without any budding. The movement protein allows efficient cell to cell propagation, by bypassing the host cell wall barrier. Begomovirus genome is shuttled out of nucleus by Nuclear shuttle protein (NSP) and the movement protein transports the DNA-NSP complex to cell plasmodesmata and facilitates further movement across the cell wall. This is Movement protein BC1 from Brassica oleracea (Wild cabbage).